Here is a 214-residue protein sequence, read N- to C-terminus: Attacin (214 aa).

A signal peptide spans 1–19; that stretch reads MSKSVALLLLCACLASGRH. Positions 20 to 26 are excised as a propeptide; it reads VPTRARR.

It belongs to the attacin/sarcotoxin-2 family. As to expression, highest expression in fat body and hemocytes and to a much lesser extent in Malpighian tubules, silk gland and midgut.

It localises to the secreted. Its function is as follows. Hemolymph antibacterial protein. Has a wide spectrum of activity against both Gram-positive and Gram-negative bacteria. The polypeptide is Attacin (Bombyx mori (Silk moth)).